The following is a 654-amino-acid chain: Fructose-1,6-bisphosphatase class 3 (654 aa).

Belongs to the FBPase class 3 family. Mn(2+) is required as a cofactor.

The catalysed reaction is beta-D-fructose 1,6-bisphosphate + H2O = beta-D-fructose 6-phosphate + phosphate. It functions in the pathway carbohydrate biosynthesis; gluconeogenesis. The sequence is that of Fructose-1,6-bisphosphatase class 3 from Staphylococcus haemolyticus (strain JCSC1435).